The primary structure comprises 126 residues: UPF0102 protein Mlg_2205 (126 aa).

The protein belongs to the UPF0102 family.

The protein is UPF0102 protein Mlg_2205 of Alkalilimnicola ehrlichii (strain ATCC BAA-1101 / DSM 17681 / MLHE-1).